We begin with the raw amino-acid sequence, 95 residues long: PIK3R3 upstream open reading frame protein (95 aa).

Positions 1 to 27 (MGPSRLVRGPRPQGMRSPYRRPGMGWP) are disordered.

The chain is PIK3R3 upstream open reading frame protein from Homo sapiens (Human).